Here is a 418-residue protein sequence, read N- to C-terminus: Gamma-glutamyl phosphate reductase (418 aa).

It belongs to the gamma-glutamyl phosphate reductase family.

The protein localises to the cytoplasm. The enzyme catalyses L-glutamate 5-semialdehyde + phosphate + NADP(+) = L-glutamyl 5-phosphate + NADPH + H(+). Its pathway is amino-acid biosynthesis; L-proline biosynthesis; L-glutamate 5-semialdehyde from L-glutamate: step 2/2. In terms of biological role, catalyzes the NADPH-dependent reduction of L-glutamate 5-phosphate into L-glutamate 5-semialdehyde and phosphate. The product spontaneously undergoes cyclization to form 1-pyrroline-5-carboxylate. This chain is Gamma-glutamyl phosphate reductase, found in Teredinibacter turnerae (strain ATCC 39867 / T7901).